The following is a 1220-amino-acid chain: Diacylglycerol kinase delta (1220 aa).

Residues 1 to 47 form a disordered region; the sequence is MAAAAGAPPPGPPQPPPPPPPEESSDSEPEAEPGSPQKLIRKVSTSG. Positions 1 to 52 are regulates association with membranes; it reads MAAAAGAPPPGPPQPPPPPPPEESSDSEPEAEPGSPQKLIRKVSTSGQIRQK. Residues 7–22 are compositionally biased toward pro residues; sequence APPPGPPQPPPPPPPE. Residues 53–146 form the PH domain; the sequence is TILKEGMLTK…WIAALKTVQN (94 aa). 2 consecutive Phorbol-ester/DAG-type zinc fingers follow at residues 163–213 and 235–286; these read MHNW…TSNC and PHQW…VMKC. Residues 317 to 451 form the DAGKc domain; sequence SCTSPLLVFV…MLDRWSVMAY (135 aa). Positions 554-584 are disordered; the sequence is DDESQASSSLSNPPPTIAEEAEDGDGSGNIC. Positions 1151 to 1214 constitute an SAM domain; that stretch reads WGTEEVAAWL…LCGIKELSRS (64 aa).

It belongs to the eukaryotic diacylglycerol kinase family. Homooligomer. Monomer. Interacts with AP2A2; regulates clathrin-dependent endocytosis. In terms of tissue distribution, widely expressed.

The protein resides in the cell membrane. It is found in the membrane. The protein localises to the clathrin-coated pit. Its subcellular location is the cytoplasm. The enzyme catalyses a 1,2-diacyl-sn-glycerol + ATP = a 1,2-diacyl-sn-glycero-3-phosphate + ADP + H(+). It catalyses the reaction 1,2-di-(9Z-octadecenoyl)-sn-glycerol + ATP = 1,2-di-(9Z-octadecenoyl)-sn-glycero-3-phosphate + ADP + H(+). The catalysed reaction is 1-octadecanoyl-2-(5Z,8Z,11Z,14Z-eicosatetraenoyl)-sn-glycerol + ATP = 1-octadecanoyl-2-(5Z,8Z,11Z,14Z-eicosatetraenoyl)-sn-glycero-3-phosphate + ADP + H(+). The protein operates within lipid metabolism; glycerolipid metabolism. Functionally, diacylglycerol kinase that converts diacylglycerol/DAG into phosphatidic acid/phosphatidate/PA and regulates the respective levels of these two bioactive lipids. Thereby, acts as a central switch between the signaling pathways activated by these second messengers with different cellular targets and opposite effects in numerous biological processes. By controlling the levels of diacylglycerol, regulates for instance the PKC and EGF receptor signaling pathways and plays a crucial role during development. May also regulate clathrin-dependent endocytosis. In Mus musculus (Mouse), this protein is Diacylglycerol kinase delta.